We begin with the raw amino-acid sequence, 115 residues long: NAD(P)H-quinone oxidoreductase subunit M (115 aa).

This sequence belongs to the complex I NdhM subunit family. In terms of assembly, NDH-1 can be composed of about 15 different subunits; different subcomplexes with different compositions have been identified which probably have different functions.

Its subcellular location is the cellular thylakoid membrane. The catalysed reaction is a plastoquinone + NADH + (n+1) H(+)(in) = a plastoquinol + NAD(+) + n H(+)(out). It carries out the reaction a plastoquinone + NADPH + (n+1) H(+)(in) = a plastoquinol + NADP(+) + n H(+)(out). Functionally, NDH-1 shuttles electrons from an unknown electron donor, via FMN and iron-sulfur (Fe-S) centers, to quinones in the respiratory and/or the photosynthetic chain. The immediate electron acceptor for the enzyme in this species is believed to be plastoquinone. Couples the redox reaction to proton translocation, and thus conserves the redox energy in a proton gradient. Cyanobacterial NDH-1 also plays a role in inorganic carbon-concentration. The polypeptide is NAD(P)H-quinone oxidoreductase subunit M (Prochlorococcus marinus (strain AS9601)).